The primary structure comprises 512 residues: Centrosomal protein CCDC61 (512 aa).

Methionine 1 is modified (N-acetylmethionine). Positions 1-142 (MEQPAGLQVD…PLPLPYQGKP (142 aa)) are head domain. Coiled coils occupy residues 176 to 203 (WHLR…REEA) and 246 to 273 (RRLA…NCEL). Threonine 282 carries the phosphothreonine modification. Disordered stretches follow at residues 282-415 (TLPA…SFRS) and 430-472 (SQSV…HLAS). Residues 287–300 (AREDRALSSRERST) are compositionally biased toward basic and acidic residues. A phosphoserine mark is found at serine 328, serine 330, serine 372, and serine 375. The span at 406 to 415 (RSSSVDSFRS) shows a compositional bias: low complexity. Serine 447 and serine 473 each carry phosphoserine.

The protein belongs to the CCDC61 family. As to quaternary structure, forms homodimers (via head domain). Interacts with CEP170. Interacts with PCM1 and CEP131. Binds tubulin.

Its subcellular location is the cytoplasm. It is found in the cytoskeleton. The protein localises to the microtubule organizing center. It localises to the centrosome. The protein resides in the centriolar satellite. Its subcellular location is the cilium basal body. Microtubule-binding centrosomal protein required for centriole cohesion, independently of the centrosome-associated protein/CEP250 and rootletin/CROCC linker. In interphase, required for anchoring microtubule at the mother centriole subdistal appendages and for centrosome positioning. During mitosis, may be involved in spindle assembly and chromatin alignment by regulating the organization of spindle microtubules into a symmetrical structure. Plays a non-essential role in ciliogenesis. In Rattus norvegicus (Rat), this protein is Centrosomal protein CCDC61.